We begin with the raw amino-acid sequence, 256 residues long: MNNFRQCALCIGTSVLILLVSGCSGVFDTPEDSKETQIKKSFAKTLDMYPIKNLEDLYDKEGYRDGEFKKDDKGMWTIYTDFAKSNKSDELDDEGMVLNLDRNTRTAKGYYFVKKFYEKDKFSDRKNYKVEMKNNKIILLDKVNDPNLKERIENFKFFGQYANFKDLENYNNGDVSINWNVPSYDVEYKMSNKDENVKQLRSRYNIPTDKAPMLKMHIDGDLKGSSVGYKRLEIDFSKEDRDISVIDYLSYKPAKK.

The N-terminal stretch at Met-1 to Gly-22 is a signal peptide. Residue Cys-23 is the site of N-palmitoyl cysteine attachment. Cys-23 carries the S-diacylglycerol cysteine lipid modification.

The protein belongs to the staphylococcal tandem lipoprotein family.

The protein resides in the cell membrane. This is an uncharacterized protein from Staphylococcus aureus (strain bovine RF122 / ET3-1).